Consider the following 143-residue polypeptide: Transcriptional regulator MraZ (143 aa).

SpoVT-AbrB domains lie at 5–47 (TYEP…SAEE) and 76–119 (ASDE…DAAA).

The protein belongs to the MraZ family. As to quaternary structure, forms oligomers.

Its subcellular location is the cytoplasm. The protein resides in the nucleoid. This chain is Transcriptional regulator MraZ, found in Kocuria rhizophila (strain ATCC 9341 / DSM 348 / NBRC 103217 / DC2201).